The primary structure comprises 308 residues: Ribonuclease HIII (308 aa).

One can recognise an RNase H type-2 domain in the interval 91–308 (KNVIGSDEVG…TEKALKMVKK (218 aa)). A divalent metal cation is bound by residues aspartate 97, glutamate 98, and aspartate 202.

It belongs to the RNase HII family. RnhC subfamily. Mn(2+) is required as a cofactor. Requires Mg(2+) as cofactor.

It localises to the cytoplasm. It carries out the reaction Endonucleolytic cleavage to 5'-phosphomonoester.. Functionally, endonuclease that specifically degrades the RNA of RNA-DNA hybrids. This chain is Ribonuclease HIII, found in Listeria monocytogenes serotype 4b (strain CLIP80459).